A 59-amino-acid chain; its full sequence is UPF0434 protein GOX0764 (59 aa).

The protein belongs to the UPF0434 family.

In Gluconobacter oxydans (strain 621H) (Gluconobacter suboxydans), this protein is UPF0434 protein GOX0764.